We begin with the raw amino-acid sequence, 190 residues long: dTTP/UTP pyrophosphatase (190 aa).

The active-site Proton acceptor is D71.

The protein belongs to the Maf family. YhdE subfamily. The cofactor is a divalent metal cation.

The protein resides in the cytoplasm. It carries out the reaction dTTP + H2O = dTMP + diphosphate + H(+). The enzyme catalyses UTP + H2O = UMP + diphosphate + H(+). Its function is as follows. Nucleoside triphosphate pyrophosphatase that hydrolyzes dTTP and UTP. May have a dual role in cell division arrest and in preventing the incorporation of modified nucleotides into cellular nucleic acids. This is dTTP/UTP pyrophosphatase from Xanthomonas euvesicatoria pv. vesicatoria (strain 85-10) (Xanthomonas campestris pv. vesicatoria).